Reading from the N-terminus, the 276-residue chain is Diaminopimelate epimerase (276 aa).

The substrate site is built by Asn13, Gln46, and Asn66. Cys75 serves as the catalytic Proton donor. Substrate contacts are provided by residues 76–77 (GN), Asn159, Asn192, and 210–211 (ER). The active-site Proton acceptor is the Cys219. Residue 220 to 221 (GS) coordinates substrate.

It belongs to the diaminopimelate epimerase family. As to quaternary structure, homodimer.

It is found in the cytoplasm. The catalysed reaction is (2S,6S)-2,6-diaminopimelate = meso-2,6-diaminopimelate. The protein operates within amino-acid biosynthesis; L-lysine biosynthesis via DAP pathway; DL-2,6-diaminopimelate from LL-2,6-diaminopimelate: step 1/1. In terms of biological role, catalyzes the stereoinversion of LL-2,6-diaminopimelate (L,L-DAP) to meso-diaminopimelate (meso-DAP), a precursor of L-lysine and an essential component of the bacterial peptidoglycan. This chain is Diaminopimelate epimerase, found in Vibrio parahaemolyticus serotype O3:K6 (strain RIMD 2210633).